The chain runs to 373 residues: uncharacterized protein (373 aa).

A CP-type G domain is found at 14–168 (KKIVNKIIDE…LMDTPGVLEM (155 aa)). 117–124 (GYPNVGKS) contributes to the GTP binding site.

It belongs to the TRAFAC class YlqF/YawG GTPase family.

This is an uncharacterized protein from Methanocaldococcus jannaschii (strain ATCC 43067 / DSM 2661 / JAL-1 / JCM 10045 / NBRC 100440) (Methanococcus jannaschii).